A 337-amino-acid chain; its full sequence is Fructose-1,6-bisphosphatase class 1 (337 aa).

The Mg(2+) site is built by E94, D116, L118, and D119. Residues 119–122, N210, and K276 each bind substrate; that span reads DGSS. E282 contacts Mg(2+).

This sequence belongs to the FBPase class 1 family. As to quaternary structure, homotetramer. It depends on Mg(2+) as a cofactor.

It localises to the cytoplasm. The enzyme catalyses beta-D-fructose 1,6-bisphosphate + H2O = beta-D-fructose 6-phosphate + phosphate. It participates in carbohydrate biosynthesis; gluconeogenesis. This chain is Fructose-1,6-bisphosphatase class 1, found in Burkholderia multivorans (strain ATCC 17616 / 249).